The following is a 154-amino-acid chain: Ribonuclease H (154 aa).

An RNase H type-1 domain is found at 3–144 (ELPVVSIFTD…ADQLARDGVA (142 aa)). Positions 12, 50, 72, and 136 each coordinate Mg(2+).

This sequence belongs to the RNase H family. In terms of assembly, monomer. Mg(2+) is required as a cofactor.

Its subcellular location is the cytoplasm. The catalysed reaction is Endonucleolytic cleavage to 5'-phosphomonoester.. Its function is as follows. Endonuclease that specifically degrades the RNA of RNA-DNA hybrids. The protein is Ribonuclease H of Bradyrhizobium sp. (strain ORS 278).